The following is a 430-amino-acid chain: Serine--tRNA ligase (430 aa).

236–238 provides a ligand contact to L-serine; the sequence is TAE. 267–269 serves as a coordination point for ATP; the sequence is RRE. Glutamate 290 contributes to the L-serine binding site. 354–357 is a binding site for ATP; the sequence is EISS. Serine 390 provides a ligand contact to L-serine.

This sequence belongs to the class-II aminoacyl-tRNA synthetase family. Type-1 seryl-tRNA synthetase subfamily. As to quaternary structure, homodimer. The tRNA molecule binds across the dimer.

It is found in the cytoplasm. It catalyses the reaction tRNA(Ser) + L-serine + ATP = L-seryl-tRNA(Ser) + AMP + diphosphate + H(+). The enzyme catalyses tRNA(Sec) + L-serine + ATP = L-seryl-tRNA(Sec) + AMP + diphosphate + H(+). The protein operates within aminoacyl-tRNA biosynthesis; selenocysteinyl-tRNA(Sec) biosynthesis; L-seryl-tRNA(Sec) from L-serine and tRNA(Sec): step 1/1. Functionally, catalyzes the attachment of serine to tRNA(Ser). Is also able to aminoacylate tRNA(Sec) with serine, to form the misacylated tRNA L-seryl-tRNA(Sec), which will be further converted into selenocysteinyl-tRNA(Sec). The protein is Serine--tRNA ligase of Gloeothece citriformis (strain PCC 7424) (Cyanothece sp. (strain PCC 7424)).